A 718-amino-acid chain; its full sequence is DNA topoisomerase 1 (718 aa).

The region spanning 9 to 151 is the Toprim domain; that stretch reads HEVIICEKPK…KFSTLTREEI (143 aa). 2 residues coordinate Mg(2+): Glu-15 and Asp-113. In terms of domain architecture, Topo IA-type catalytic spans 162 to 571; the sequence is DYGQVDSGAA…EAITEVRSIL (410 aa). Residues 202–207 are interaction with DNA; it reads SAGRVQ. The O-(5'-phospho-DNA)-tyrosine intermediate role is filled by Tyr-320. Basic and acidic residues predominate over residues 361-371; sequence HEGKKEDDAHP. Positions 361–380 are disordered; sequence HEGKKEDDAHPAIHPTGLLP. 2 consecutive C4-type zinc fingers follow at residues 598–626 and 680–706; these read CPAC…YPDC and CPEC…FPKC.

The protein belongs to the type IA topoisomerase family. Monomer. The cofactor is Mg(2+).

The catalysed reaction is ATP-independent breakage of single-stranded DNA, followed by passage and rejoining.. Functionally, releases the supercoiling and torsional tension of DNA, which is introduced during the DNA replication and transcription, by transiently cleaving and rejoining one strand of the DNA duplex. Introduces a single-strand break via transesterification at a target site in duplex DNA. The scissile phosphodiester is attacked by the catalytic tyrosine of the enzyme, resulting in the formation of a DNA-(5'-phosphotyrosyl)-enzyme intermediate and the expulsion of a 3'-OH DNA strand. The free DNA strand then undergoes passage around the unbroken strand, thus removing DNA supercoils. Finally, in the religation step, the DNA 3'-OH attacks the covalent intermediate to expel the active-site tyrosine and restore the DNA phosphodiester backbone. The polypeptide is DNA topoisomerase 1 (Methanothermobacter thermautotrophicus (strain ATCC 29096 / DSM 1053 / JCM 10044 / NBRC 100330 / Delta H) (Methanobacterium thermoautotrophicum)).